The chain runs to 358 residues: Protein phosphatase 1 regulatory subunit 3G (358 aa).

Residues Met-1–Glu-71 form a disordered region. The segment covering Glu-11–Ala-29 has biased composition (low complexity). Ser-86 bears the Phosphoserine mark. In terms of domain architecture, CBM21 spans Ala-210 to Arg-350. Over residues Glu-270–Pro-280 the composition is skewed to low complexity. The tract at residues Glu-270–Pro-295 is disordered.

Functionally, glycogen-targeting subunit for protein phosphatase 1 (PP1). Involved in the regulation of hepatic glycogenesis in a manner coupled to the fasting-feeding cycle and distinct from other glycogen-targeting subunits. This chain is Protein phosphatase 1 regulatory subunit 3G (PPP1R3G), found in Homo sapiens (Human).